The following is a 223-amino-acid chain: Phosphoribosylformylglycinamidine synthase subunit PurQ (223 aa).

One can recognise a Glutamine amidotransferase type-1 domain in the interval 3–223 (SAVVQLPGLN…FASALDVIAA (221 aa)). Residue Cys86 is the Nucleophile of the active site. Residues His196 and Glu198 contribute to the active site.

In terms of assembly, part of the FGAM synthase complex composed of 1 PurL, 1 PurQ and 2 PurS subunits.

It is found in the cytoplasm. The enzyme catalyses N(2)-formyl-N(1)-(5-phospho-beta-D-ribosyl)glycinamide + L-glutamine + ATP + H2O = 2-formamido-N(1)-(5-O-phospho-beta-D-ribosyl)acetamidine + L-glutamate + ADP + phosphate + H(+). The catalysed reaction is L-glutamine + H2O = L-glutamate + NH4(+). The protein operates within purine metabolism; IMP biosynthesis via de novo pathway; 5-amino-1-(5-phospho-D-ribosyl)imidazole from N(2)-formyl-N(1)-(5-phospho-D-ribosyl)glycinamide: step 1/2. Its function is as follows. Part of the phosphoribosylformylglycinamidine synthase complex involved in the purines biosynthetic pathway. Catalyzes the ATP-dependent conversion of formylglycinamide ribonucleotide (FGAR) and glutamine to yield formylglycinamidine ribonucleotide (FGAM) and glutamate. The FGAM synthase complex is composed of three subunits. PurQ produces an ammonia molecule by converting glutamine to glutamate. PurL transfers the ammonia molecule to FGAR to form FGAM in an ATP-dependent manner. PurS interacts with PurQ and PurL and is thought to assist in the transfer of the ammonia molecule from PurQ to PurL. In Rhizobium meliloti (strain 1021) (Ensifer meliloti), this protein is Phosphoribosylformylglycinamidine synthase subunit PurQ.